Reading from the N-terminus, the 180-residue chain is Dephospho-CoA kinase (180 aa).

The region spanning 2–180 (VIGVTGKIGT…VMKLVWEKRE (179 aa)) is the DPCK domain. Residue 10 to 15 (GTGKST) coordinates ATP.

This sequence belongs to the CoaE family.

It localises to the cytoplasm. The enzyme catalyses 3'-dephospho-CoA + ATP = ADP + CoA + H(+). It participates in cofactor biosynthesis; coenzyme A biosynthesis; CoA from (R)-pantothenate: step 5/5. Functionally, catalyzes the phosphorylation of the 3'-hydroxyl group of dephosphocoenzyme A to form coenzyme A. The protein is Dephospho-CoA kinase of Thermotoga maritima (strain ATCC 43589 / DSM 3109 / JCM 10099 / NBRC 100826 / MSB8).